Consider the following 100-residue polypeptide: Integration host factor subunit alpha (100 aa).

The protein belongs to the bacterial histone-like protein family. Heterodimer of an alpha and a beta chain.

Functionally, this protein is one of the two subunits of integration host factor, a specific DNA-binding protein that functions in genetic recombination as well as in transcriptional and translational control. The polypeptide is Integration host factor subunit alpha (Cereibacter sphaeroides (strain ATCC 17023 / DSM 158 / JCM 6121 / CCUG 31486 / LMG 2827 / NBRC 12203 / NCIMB 8253 / ATH 2.4.1.) (Rhodobacter sphaeroides)).